The chain runs to 388 residues: Protein-glutamate methylesterase/protein-glutamine glutaminase 1 (388 aa).

The region spanning 4 to 121 (QVLVVDDSSF…ATNKDEAIRL (118 aa)) is the Response regulatory domain. Asp55 carries the 4-aspartylphosphate modification. A disordered region spans residues 149-190 (SARAGLSSTSPTLGSSTLGRSPASGLASSASRNSPTVSTPAS). Positions 153 to 169 (GLSSTSPTLGSSTLGRS) are enriched in low complexity. Over residues 174-189 (LASSASRNSPTVSTPA) the composition is skewed to polar residues. A CheB-type methylesterase domain is found at 188–388 (PASAIRASGK…EAILKESGRG (201 aa)). Active-site residues include Ser207, His234, and Asp330.

The protein belongs to the CheB family. Phosphorylated by CheA. Phosphorylation of the N-terminal regulatory domain activates the methylesterase activity.

It localises to the cytoplasm. The catalysed reaction is [protein]-L-glutamate 5-O-methyl ester + H2O = L-glutamyl-[protein] + methanol + H(+). The enzyme catalyses L-glutaminyl-[protein] + H2O = L-glutamyl-[protein] + NH4(+). Its function is as follows. Involved in chemotaxis. Part of a chemotaxis signal transduction system that modulates chemotaxis in response to various stimuli. Catalyzes the demethylation of specific methylglutamate residues introduced into the chemoreceptors (methyl-accepting chemotaxis proteins or MCP) by CheR. Also mediates the irreversible deamidation of specific glutamine residues to glutamic acid. This Shewanella denitrificans (strain OS217 / ATCC BAA-1090 / DSM 15013) protein is Protein-glutamate methylesterase/protein-glutamine glutaminase 1.